The following is a 474-amino-acid chain: Carbohydrate sulfotransferase 3 (474 aa).

Over 1–19 the chain is Cytoplasmic; that stretch reads MEKGLALPQDCRDLVHNLK. The chain crosses the membrane as a helical; Signal-anchor for type II membrane protein span at residues 20 to 38; the sequence is IRGRYVLFLAFVVIVFIFI. Residues 39-474 lie on the Lumenal side of the membrane; that stretch reads EKENKIISRV…LEERGTFWVT (436 aa). N-linked (GlcNAc...) asparagine glycans are attached at residues Asn63, Asn74, and Asn96. 137-143 lines the 3'-phosphoadenylyl sulfate pocket; sequence TRTGSSF. N-linked (GlcNAc...) asparagine glycosylation is present at Asn252. Residue 297–305 coordinates 3'-phosphoadenylyl sulfate; that stretch reads RDPRAVLAS. 2 N-linked (GlcNAc...) asparagine glycosylation sites follow: Asn415 and Asn459.

Belongs to the sulfotransferase 1 family. Gal/GlcNAc/GalNAc subfamily. N-glycosylated.

It localises to the golgi apparatus membrane. The catalysed reaction is chondroitin beta-D-glucuronate + n 3'-phosphoadenylyl sulfate = chondroitin 6'-sulfate + n adenosine 3',5'-bisphosphate + n H(+). It carries out the reaction 3'-phosphoadenylyl sulfate + keratan = adenosine 3',5'-bisphosphate + keratan 6'-sulfate.. Sulfotransferase that utilizes 3'-phospho-5'-adenylyl sulfate (PAPS) as sulfonate donor to catalyze the transfer of sulfate to position 6 of the N-acetylgalactosamine (GalNAc) residue of chondroitin. Chondroitin sulfate constitutes the predominant proteoglycan present in cartilage and is distributed on the surfaces of many cells and extracellular matrices. Catalyzes with a lower efficiency the sulfation of Gal residues of keratan sulfate, another glycosaminoglycan. Can also catalyze the sulfation of the Gal residues in sialyl N-acetyllactosamine (sialyl LacNAc) oligosaccharides. May play a role in the maintenance of naive T-lymphocytes in the spleen. The protein is Carbohydrate sulfotransferase 3 (Chst3) of Rattus norvegicus (Rat).